We begin with the raw amino-acid sequence, 122 residues long: Small ribosomal subunit protein uS13 (122 aa).

A disordered region spans residues 98 to 122; the sequence is VRGQRTKTNARTRKGKRKTVGAKAK.

Belongs to the universal ribosomal protein uS13 family. Part of the 30S ribosomal subunit. Forms a loose heterodimer with protein S19. Forms two bridges to the 50S subunit in the 70S ribosome.

Its function is as follows. Located at the top of the head of the 30S subunit, it contacts several helices of the 16S rRNA. In the 70S ribosome it contacts the 23S rRNA (bridge B1a) and protein L5 of the 50S subunit (bridge B1b), connecting the 2 subunits; these bridges are implicated in subunit movement. Contacts the tRNAs in the A and P-sites. This chain is Small ribosomal subunit protein uS13, found in Nautilia profundicola (strain ATCC BAA-1463 / DSM 18972 / AmH).